A 459-amino-acid chain; its full sequence is ATP synthase subunit beta (459 aa).

148-155 (GGAGVGKT) lines the ATP pocket.

This sequence belongs to the ATPase alpha/beta chains family. F-type ATPases have 2 components, CF(1) - the catalytic core - and CF(0) - the membrane proton channel. CF(1) has five subunits: alpha(3), beta(3), gamma(1), delta(1), epsilon(1). CF(0) has three main subunits: a(1), b(2) and c(9-12). The alpha and beta chains form an alternating ring which encloses part of the gamma chain. CF(1) is attached to CF(0) by a central stalk formed by the gamma and epsilon chains, while a peripheral stalk is formed by the delta and b chains.

It is found in the cell inner membrane. It catalyses the reaction ATP + H2O + 4 H(+)(in) = ADP + phosphate + 5 H(+)(out). Its function is as follows. Produces ATP from ADP in the presence of a proton gradient across the membrane. The catalytic sites are hosted primarily by the beta subunits. The chain is ATP synthase subunit beta from Cellvibrio japonicus (strain Ueda107) (Pseudomonas fluorescens subsp. cellulosa).